A 424-amino-acid polypeptide reads, in one-letter code: CinA-like protein (424 aa).

The protein belongs to the CinA family.

This is CinA-like protein from Prochlorococcus marinus (strain MIT 9215).